Here is a 335-residue protein sequence, read N- to C-terminus: Phosphate acyltransferase (335 aa).

This sequence belongs to the PlsX family. As to quaternary structure, homodimer. Probably interacts with PlsY.

Its subcellular location is the cytoplasm. It carries out the reaction a fatty acyl-[ACP] + phosphate = an acyl phosphate + holo-[ACP]. The protein operates within lipid metabolism; phospholipid metabolism. Its function is as follows. Catalyzes the reversible formation of acyl-phosphate (acyl-PO(4)) from acyl-[acyl-carrier-protein] (acyl-ACP). This enzyme utilizes acyl-ACP as fatty acyl donor, but not acyl-CoA. This is Phosphate acyltransferase from Desulforudis audaxviator (strain MP104C).